We begin with the raw amino-acid sequence, 360 residues long: Glycerol-1-phosphate dehydrogenase [NAD(P)+] (360 aa).

Residues glycine 108–aspartate 112 and threonine 130–serine 133 contribute to the NAD(+) site. Aspartate 135 lines the substrate pocket. Serine 139 is a binding site for NAD(+). Aspartate 182 contacts substrate. Zn(2+) contacts are provided by aspartate 182 and histidine 262. Residue histidine 266 participates in substrate binding. Zn(2+) is bound at residue histidine 278.

The protein belongs to the glycerol-1-phosphate dehydrogenase family. Zn(2+) serves as cofactor.

The protein resides in the cytoplasm. The enzyme catalyses sn-glycerol 1-phosphate + NAD(+) = dihydroxyacetone phosphate + NADH + H(+). It catalyses the reaction sn-glycerol 1-phosphate + NADP(+) = dihydroxyacetone phosphate + NADPH + H(+). Its pathway is membrane lipid metabolism; glycerophospholipid metabolism. Functionally, catalyzes the NAD(P)H-dependent reduction of dihydroxyacetonephosphate (DHAP or glycerone phosphate) to glycerol 1-phosphate (G1P). The G1P thus generated is used as the glycerophosphate backbone of phospholipids in the cellular membranes of Archaea. This Methanoculleus marisnigri (strain ATCC 35101 / DSM 1498 / JR1) protein is Glycerol-1-phosphate dehydrogenase [NAD(P)+].